We begin with the raw amino-acid sequence, 89 residues long: MAISKEKKNEIIAQYARHEGDTGSVEVQVAVLTWEINHLNDHIKQHKKDHATYRGLMKKIGHRRNLLAYLRRKDVNRYRELISSLGLRR.

The protein belongs to the universal ribosomal protein uS15 family. In terms of assembly, part of the 30S ribosomal subunit. Forms a bridge to the 50S subunit in the 70S ribosome, contacting the 23S rRNA.

One of the primary rRNA binding proteins, it binds directly to 16S rRNA where it helps nucleate assembly of the platform of the 30S subunit by binding and bridging several RNA helices of the 16S rRNA. Its function is as follows. Forms an intersubunit bridge (bridge B4) with the 23S rRNA of the 50S subunit in the ribosome. This Streptococcus thermophilus (strain CNRZ 1066) protein is Small ribosomal subunit protein uS15.